Here is a 509-residue protein sequence, read N- to C-terminus: Solute carrier family 2, facilitated glucose transporter member 4 (509 aa).

Topologically, residues 1-24 (MPSGFQQIGSEDGEPPQQRVTGTL) are cytoplasmic. An interaction with SRFBP1 region spans residues 7 to 13 (QIGSEDG). Phosphoserine is present on S10. The helical transmembrane segment at 25-45 (VLAVFSAVLGSLQFGYNIGVI) threads the bilayer. Over 46–81 (NAPQKVIEQSYNETWLGRQGPEGPSSIPPGTLTTLW) the chain is Extracellular. N-linked (GlcNAc...) asparagine glycosylation occurs at N57. Residues 82-102 (ALSVAIFSVGGMISSFLIGII) form a helical membrane-spanning segment. Topologically, residues 103–111 (SQWLGRKRA) are cytoplasmic. Residues 112–132 (MLVNNVLAVLGGSLMGLANAA) traverse the membrane as a helical segment. Over 133-142 (ASYEMLILGR) the chain is Extracellular. Residues 143 to 163 (FLIGAYSGLTSGLVPMYVGEI) traverse the membrane as a helical segment. Over 164-171 (APTHLRGA) the chain is Cytoplasmic. The chain crosses the membrane as a helical span at residues 172-192 (LGTLNQLAIVIGILIAQVLGL). Position 177 (Q177) interacts with D-glucose. Topologically, residues 193–201 (ESLLGTASL) are extracellular. The helical transmembrane segment at 202–222 (WPLLLGLTVLPALLQLVLLPF) threads the bilayer. Residue C223 is the site of S-palmitoyl cysteine attachment. Over 223-287 (CPESPRYLYI…LLGSRTHRQP (65 aa)) the chain is Cytoplasmic. Position 274 is a phosphoserine; by SGK1 (S274). The chain crosses the membrane as a helical span at residues 288 to 308 (LIIAVVLQLSQQLSGINAVFY). D-glucose-binding positions include 298 to 299 (QQ) and N304. Over 309-323 (YSTSIFETAGVGQPA) the chain is Extracellular. The chain crosses the membrane as a helical span at residues 324 to 344 (YATIGAGVVNTVFTLVSVLLV). Position 333 (N333) interacts with D-glucose. Residues 345-353 (ERAGRRTLH) are Cytoplasmic-facing. The chain crosses the membrane as a helical span at residues 354 to 374 (LLGLAGMCGCAILMTVALLLL). Over 375–384 (ERVPAMSYVS) the chain is Extracellular. The chain crosses the membrane as a helical span at residues 385 to 405 (IVAIFGFVAFFEIGPGPIPWF). E396 and W404 together coordinate D-glucose. Over 406–417 (IVAELFSQGPRP) the chain is Cytoplasmic. A helical transmembrane segment spans residues 418–438 (AAMAVAGFSNWTSNFIIGMGF). Residues 439 to 445 (QYVAEAM) are Extracellular-facing. A helical transmembrane segment spans residues 446-466 (GPYVFLLFAVLLLGFFIFTFL). Residues 467–509 (RVPETRGRTFDQISAAFHRTPSLLEQEVKPSTELEYLGPDEND) lie on the Cytoplasmic side of the membrane. A Phosphothreonine modification is found at T486. The residue at position 488 (S488) is a Phosphoserine. The Dileucine internalization motif motif lies at 489-490 (LL).

The protein belongs to the major facilitator superfamily. Sugar transporter (TC 2.A.1.1) family. Glucose transporter subfamily. In terms of assembly, interacts with NDUFA9. Binds to DAXX. Interacts via its N-terminus with SRFBP1. Interacts with TRARG1; the interaction is required for proper SLC2A4 recycling after insulin stimulation. In terms of processing, sumoylated. Post-translationally, palmitoylated. Palmitoylation by ZDHHC7 controls the insulin-dependent translocation of GLUT4 to the plasma membrane. Skeletal and cardiac muscles; brown and white fat.

The protein resides in the cell membrane. The protein localises to the endomembrane system. It is found in the cytoplasm. Its subcellular location is the perinuclear region. The enzyme catalyses D-glucose(out) = D-glucose(in). In terms of biological role, insulin-regulated facilitative glucose transporter, which plays a key role in removal of glucose from circulation. Response to insulin is regulated by its intracellular localization: in the absence of insulin, it is efficiently retained intracellularly within storage compartments in muscle and fat cells. Upon insulin stimulation, translocates from these compartments to the cell surface where it transports glucose from the extracellular milieu into the cell. This Homo sapiens (Human) protein is Solute carrier family 2, facilitated glucose transporter member 4.